Reading from the N-terminus, the 215-residue chain is MVLTIYAPLFASSKRAVVTLVEKGVSFETVNVDLMKGEQRQPEYLAIQPFGKIPVLVDGDYKIFESRAIMRYIAEKYRSQGPDLLGKTIEERGQVEQWLDVEATSYHPPLLALTLNIVFAPLMGFPADEKVIKESEEKLAEVLDVYEAQLSKNEYLAGDFVSLADLAHLPFTEYLVGPIGKAHLIKDRKHVSAWWDKISSRAAWKEVSAKYSLPV.

The 80-residue stretch at 2-81 (VLTIYAPLFA…YIAEKYRSQG (80 aa)) folds into the GST N-terminal domain. Glutathione is bound by residues 11–12 (AS), 39–40 (QR), 52–53 (KI), and 65–66 (ES). The GST C-terminal domain maps to 88 to 215 (TIEERGQVEQ…EVSAKYSLPV (128 aa)).

It belongs to the GST superfamily. Phi family. As to quaternary structure, interacts with BAK1. As to expression, expressed in roots, stems, floral buds, mature flowers and leaves.

Its subcellular location is the cytoplasm. It is found in the cytosol. The enzyme catalyses RX + glutathione = an S-substituted glutathione + a halide anion + H(+). In vitro, possesses glutathione S-transferase activity toward 1-chloro-2,4-dinitrobenzene (CDNB) and benzyl isothiocyanate (BITC). May be involved in the conjugation of reduced glutathione to a wide number of exogenous and endogenous hydrophobic electrophiles and have a detoxification role against certain herbicides. The sequence is that of Glutathione S-transferase F10 from Arabidopsis thaliana (Mouse-ear cress).